A 99-amino-acid chain; its full sequence is Aspartyl/glutamyl-tRNA(Asn/Gln) amidotransferase subunit C (99 aa).

It belongs to the GatC family. As to quaternary structure, heterotrimer of A, B and C subunits.

The catalysed reaction is L-glutamyl-tRNA(Gln) + L-glutamine + ATP + H2O = L-glutaminyl-tRNA(Gln) + L-glutamate + ADP + phosphate + H(+). The enzyme catalyses L-aspartyl-tRNA(Asn) + L-glutamine + ATP + H2O = L-asparaginyl-tRNA(Asn) + L-glutamate + ADP + phosphate + 2 H(+). Allows the formation of correctly charged Asn-tRNA(Asn) or Gln-tRNA(Gln) through the transamidation of misacylated Asp-tRNA(Asn) or Glu-tRNA(Gln) in organisms which lack either or both of asparaginyl-tRNA or glutaminyl-tRNA synthetases. The reaction takes place in the presence of glutamine and ATP through an activated phospho-Asp-tRNA(Asn) or phospho-Glu-tRNA(Gln). The polypeptide is Aspartyl/glutamyl-tRNA(Asn/Gln) amidotransferase subunit C (Solibacter usitatus (strain Ellin6076)).